A 297-amino-acid chain; its full sequence is HTH-type transcriptional regulator ArgP (297 aa).

Residues 4–60 (PDYRTLQALDAVIRERGFERAAQKLCITQSAVSQRIKQLENMFGQPLLVRTVPPRPT) form the HTH lysR-type domain. Residues 21–40 (FERAAQKLCITQSAVSQRIK) constitute a DNA-binding region (H-T-H motif).

The protein belongs to the LysR transcriptional regulatory family. Homodimer.

Controls the transcription of genes involved in arginine and lysine metabolism. The chain is HTH-type transcriptional regulator ArgP from Salmonella dublin (strain CT_02021853).